The chain runs to 535 residues: Beta-amylase 1, chloroplastic (535 aa).

The N-terminal 36 residues, 1-36 (MALNLAQSAAAAACFATAGDARRAASVVAMPSSSSS), are a transit peptide targeting the chloroplast. The substrate site is built by D115, H155, and D163. E247 (proton donor) is an active-site residue. Positions 361, 366, and 408 each coordinate substrate. The active-site Proton acceptor is E446. Substrate is bound by residues 447–448 (NA) and R480.

Belongs to the glycosyl hydrolase 14 family.

The protein localises to the plastid. It is found in the chloroplast. The catalysed reaction is Hydrolysis of (1-&gt;4)-alpha-D-glucosidic linkages in polysaccharides so as to remove successive maltose units from the non-reducing ends of the chains.. Possesses beta-amylase activity in vitro. May be involved in cold resistance by mediating the accumulation of maltose upon freezing stress, thus contributing to the protection of membranes. This Oryza sativa subsp. japonica (Rice) protein is Beta-amylase 1, chloroplastic.